We begin with the raw amino-acid sequence, 355 residues long: Histidinol-phosphate aminotransferase 2 (355 aa).

Lys213 bears the N6-(pyridoxal phosphate)lysine mark.

The protein belongs to the class-II pyridoxal-phosphate-dependent aminotransferase family. Histidinol-phosphate aminotransferase subfamily. In terms of assembly, homodimer. The cofactor is pyridoxal 5'-phosphate.

It carries out the reaction L-histidinol phosphate + 2-oxoglutarate = 3-(imidazol-4-yl)-2-oxopropyl phosphate + L-glutamate. It participates in amino-acid biosynthesis; L-histidine biosynthesis; L-histidine from 5-phospho-alpha-D-ribose 1-diphosphate: step 7/9. The sequence is that of Histidinol-phosphate aminotransferase 2 from Burkholderia lata (strain ATCC 17760 / DSM 23089 / LMG 22485 / NCIMB 9086 / R18194 / 383).